The sequence spans 399 residues: O-glucosyltransferase rumi homolog (399 aa).

The first 18 residues, 1-18 (MHFIIGIVICLSLSVIQS), serve as a signal peptide directing secretion. Asparagine 19 and asparagine 67 each carry an N-linked (GlcNAc...) asparagine glycan. 4 disulfide bridges follow: cysteine 66/cysteine 73, cysteine 71/cysteine 373, cysteine 118/cysteine 124, and cysteine 277/cysteine 300. Catalysis depends on aspartate 149, which acts as the Proton donor/acceptor. An interaction with the consensus sequence C-X-S-X-[PA]-C in peptide substrates region spans residues 189–194 (AIALYP). UDP-alpha-D-glucose contacts are provided by residues 224 to 228 (RGSRT), arginine 232, 271 to 273 (VTL), and 289 to 293 (AASFR).

This sequence belongs to the glycosyltransferase 90 family.

The protein localises to the endoplasmic reticulum lumen. It is found in the secreted. The protein operates within protein modification; protein glycosylation. Protein O-glucosyltransferase. Catalyzes the reaction that attaches glucose through an O-glycosidic linkage to a conserved serine residue found in the consensus sequence C-X-S-X-[PA]-C in epidermal growth factor-like repeats. Regulates Notch signaling by glucosylating Notch in the ER, glucosylation is required for the correct folding and cleavage of Notch. This chain is O-glucosyltransferase rumi homolog, found in Anopheles gambiae (African malaria mosquito).